Reading from the N-terminus, the 476-residue chain is Glycogen synthase (476 aa).

Residue Lys-15 participates in ADP-alpha-D-glucose binding.

The protein belongs to the glycosyltransferase 1 family. Bacterial/plant glycogen synthase subfamily.

It catalyses the reaction [(1-&gt;4)-alpha-D-glucosyl](n) + ADP-alpha-D-glucose = [(1-&gt;4)-alpha-D-glucosyl](n+1) + ADP + H(+). It participates in glycan biosynthesis; glycogen biosynthesis. In terms of biological role, synthesizes alpha-1,4-glucan chains using ADP-glucose. The chain is Glycogen synthase from Chlamydia pneumoniae (Chlamydophila pneumoniae).